Consider the following 446-residue polypeptide: UDP-N-acetylglucosamine--dolichyl-phosphate N-acetylglucosaminephosphotransferase (446 aa).

Helical transmembrane passes span 1-21 (MIESCFNVGIWATGLALLMNQ) and 25-45 (PLLSNVGLSVLAYKATAMFIP). UDP-N-acetyl-alpha-D-glucosamine contacts are provided by residues 59–61 (KDM) and Glu71. 2 helical membrane-spanning segments follow: residues 73–93 (MGAVSALVYFMCMIIFIPVLF) and 123–143 (LLGAYLSALLSILSVSLLGIL). Lys154 provides a ligand contact to dolichyl phosphate. The next 2 helical transmembrane spans lie at 155 to 175 (FFLPAIAAIPLLVVYYVDYGV) and 191 to 211 (SLINLGFLYYFYMAAVAIFCP). 208–216 (IFCPNSINI) lines the dolichyl phosphate pocket. Asn215 is a binding site for Mg(2+). The next 4 membrane-spanning stretches (helical) occupy residues 216–236 (IIAGVNGVEAGQSLVLALVIA), 254–274 (AHLLSLYLVLPLIGVTAGLLK), 282–302 (VFVGDTFCYFAGMVMAVVGIL), and 311–331 (LFFIPQIFNFALSVPQLFGLV). Asn221 is a UDP-N-acetyl-alpha-D-glucosamine binding site. Asp286 lines the Mg(2+) pocket. 335-337 (RHR) contacts UDP-N-acetyl-alpha-D-glucosamine. An N-linked (GlcNAc...) asparagine glycan is attached at Asn395. The helical transmembrane segment at 412–432 (DHLTICIMGLQLLTGIFGLII) threads the bilayer.

The protein belongs to the glycosyltransferase 4 family. The cofactor is Mg(2+).

The protein resides in the endoplasmic reticulum membrane. It catalyses the reaction a di-trans,poly-cis-dolichyl phosphate + UDP-N-acetyl-alpha-D-glucosamine = an N-acetyl-alpha-D-glucosaminyl-diphospho-di-trans,poly-cis-dolichol + UMP. It participates in protein modification; protein glycosylation. With respect to regulation, inhibited by natural nucleoside antibiotic tunicamycin, which acts as a structural analog and competitor of UDP-GlcNAc. Its function is as follows. UDP-N-acetylglucosamine--dolichyl-phosphate N-acetylglucosaminephosphotransferase that operates in the biosynthetic pathway of dolichol-linked oligosaccharides, the glycan precursors employed in protein asparagine (N)-glycosylation. The assembly of dolichol-linked oligosaccharides begins on the cytosolic side of the endoplasmic reticulum membrane and finishes in its lumen. The sequential addition of sugars to dolichol pyrophosphate produces dolichol-linked oligosaccharides containing fourteen sugars, including two GlcNAcs, nine mannoses and three glucoses. Once assembled, the oligosaccharide is transferred from the lipid to nascent proteins by oligosaccharyltransferases. Catalyzes the initial step of dolichol-linked oligosaccharide biosynthesis, transfering GlcNAc-1-P from cytosolic UDP-GlcNAc onto the carrier lipid dolichyl phosphate (P-dolichol), yielding GlcNAc-P-P-dolichol embedded in the cytoplasmic leaflet of the endoplasmic reticulum membrane. The protein is UDP-N-acetylglucosamine--dolichyl-phosphate N-acetylglucosaminephosphotransferase (gpt2) of Schizosaccharomyces pombe (strain 972 / ATCC 24843) (Fission yeast).